The sequence spans 317 residues: Trem-like transcript 1 protein (317 aa).

The N-terminal stretch at 1-20 (MDCYLLLLLLLLGLAGQGSA) is a signal peptide. One can recognise an Ig-like V-type domain in the interval 21–122 (DSHPEVLQAP…PQTLHRVSLL (102 aa)). Topologically, residues 21-175 (DSHPEVLQAP…EFRRRENSIP (155 aa)) are extracellular. Disulfide bonds link C39/C105 and C53/C60. The interval 147–166 (TGSLLEDPSLDPSASAGPHE) is disordered. Residues 176-196 (LIWGAVLLLALVVVAVVIFAV) form a helical membrane-spanning segment. At 197–317 (MARKKGNRLV…PPNSQTPPSK (121 aa)) the chain is on the cytoplasmic side. Residue C208 is the site of S-palmitoyl cysteine attachment. The disordered stretch occupies residues 212 to 278 (QSTGVPGMDP…SQPPLPPKVL (67 aa)). Over residues 261-275 (SSEPPAPPSQPPLPP) the composition is skewed to pro residues. S283 is subject to Phosphoserine. The ITIM motif lies at 284-289 (VTYATV). A disordered region spans residues 295–317 (DKGKIASCEPVQDPPNSQTPPSK). Polar residues predominate over residues 308 to 317 (PPNSQTPPSK).

As to quaternary structure, when phosphorylated, interacts with PTPN11. When phosphorylated, interacts with PTPN6. Phosphorylated on tyrosine residues. As to expression, highly expressed in bone marrow leukocytes, splenic megakaryocytes and platelets. Detected in brain, liver and in peritoneal monocytes.

It is found in the cell membrane. The protein localises to the cytoplasm. In terms of biological role, cell surface receptor that may play a role in the innate and adaptive immune response. The chain is Trem-like transcript 1 protein (Treml1) from Mus musculus (Mouse).